Reading from the N-terminus, the 249-residue chain is Putative S-adenosyl-L-methionine-dependent methyltransferase Mjls_0570 (249 aa).

S-adenosyl-L-methionine-binding positions include aspartate 111 and 141 to 142 (DL).

Belongs to the UPF0677 family.

Exhibits S-adenosyl-L-methionine-dependent methyltransferase activity. In Mycobacterium sp. (strain JLS), this protein is Putative S-adenosyl-L-methionine-dependent methyltransferase Mjls_0570.